The sequence spans 306 residues: Leucine-rich repeat-containing protein 59 (306 aa).

N-acetylmethionine is present on Met1. Position 2 is an N-acetylthreonine; in Leucine-rich repeat-containing protein 59, N-terminally processed (Thr2). Residues 2–244 are Cytoplasmic-facing; that stretch reads TKAGSKGGNL…KPPPRKHTRS (243 aa). 5 LRR repeats span residues 10–31, 40–62, 63–84, 86–107, and 109–128; these read NLRD…NEVP, KATV…CGLT, HLVK…FGRL, NLQH…FAQL, and SLKW…AKVA. 2 positions are modified to phosphoserine: Ser23 and Ser25. The residue at position 73 (Lys73) is an N6-succinyllysine. Lys135 is modified (N6-acetyllysine). Positions 152–216 form a coiled coil; the sequence is QADQERERQR…KAAKREQEKK (65 aa). A compositionally biased stretch (basic and acidic residues) spans 175-221; it reads AKQRAKEAQERELRKREKAEEKERRRKEYDALKAAKREQEKKPKKET. Residues 175–241 are disordered; the sequence is AKQRAKEAQE…RPRKPPPRKH (67 aa). Over residues 229-241 the composition is skewed to basic residues; it reads SSSRPRKPPPRKH. Residues 245 to 265 traverse the membrane as a helical segment; that stretch reads WAVLKLLLLLLLCVAGGLVAC. Over 266–306 the chain is Lumenal; sequence RVTELQQQPLCTSVNTIYDNAVRGLRSHDILQWVLQTDSQQ.

In terms of assembly, can form homodimers. Interacts with SGO1. Interacts with FGF1.

The protein localises to the microsome membrane. Its subcellular location is the endoplasmic reticulum membrane. It is found in the nucleus envelope. In terms of biological role, required for nuclear import of FGF1, but not that of FGF2. Might regulate nuclear import of exogenous FGF1 by facilitating interaction with the nuclear import machinery and by transporting cytosolic FGF1 to, and possibly through, the nuclear pores. The chain is Leucine-rich repeat-containing protein 59 (LRRC59) from Bos taurus (Bovine).